A 508-amino-acid chain; its full sequence is MNKKLNEVLLKLDQDLIKCVKGSLDLEISGVTYSSKLVLPRFVFFALPGIHFDGHDFIEIAIQKGSNVVVCSRDVDFYSPNVTYIKVDDFNIRKFMSNFSNIFYDEPSKKLKVIGVTGTDGKSSVCYYIYLLFKKKGVKVGFISTVFFDDGSGSLIKNPYRQSTPESTEIHSFLSTMVKNEAQYAILESTSHGLDLETARLIDVNYFAVVFTNIGHEHLEFHGTIQNYLNVKLGLFRSVSDDAGFGVINLDDLYSSDFKNAVKKSFTYSLKSSKADFFVSFIDEKTDSTRFEFYHKGVKYLANVSLLGSFNVENVMAALILVSQILNIDIQDIVDKLNCIKSLDGRMDSINLGQNFSVIIDYAHTPGAFSKLFPIFKRFATNRLISVFGSAGERDVEKRFLQGQIADIYSDLIILCDEDPRGENSMCIIKDIAKGIVNKVENKDLFFIADRKQAIEKAISLAKAGDLVVALGKGHESSIIYKNREVFWNEQEVVKNAILSLEKSEKEK.

UDP-N-acetyl-alpha-D-muramoyl-L-alanyl-D-glutamate is bound at residue serine 35. 118 to 124 provides a ligand contact to ATP; sequence GTDGKSS. Residues 163-164, threonine 190, and arginine 200 each bind UDP-N-acetyl-alpha-D-muramoyl-L-alanyl-D-glutamate; that span reads ST. At lysine 232 the chain carries N6-carboxylysine.

It belongs to the MurCDEF family. MurE subfamily. In terms of processing, carboxylation is probably crucial for Mg(2+) binding and, consequently, for the gamma-phosphate positioning of ATP.

It is found in the cytoplasm. It functions in the pathway cell wall biogenesis; peptidoglycan biosynthesis. Catalyzes the addition of an amino acid to the nucleotide precursor UDP-N-acetylmuramoyl-L-alanyl-D-glutamate (UMAG) in the biosynthesis of bacterial cell-wall peptidoglycan. In Borreliella burgdorferi (strain ATCC 35210 / DSM 4680 / CIP 102532 / B31) (Borrelia burgdorferi), this protein is UDP-N-acetylmuramyl-tripeptide synthetase.